The sequence spans 251 residues: Mast cell protease 3 (251 aa).

A signal peptide spans 1 to 17 (MVLFLLLVALLSPAGEA). Positions 18–19 (GK) are cleaved as a propeptide — activation peptide. Positions 20–243 (IIGGHEAKPH…FLSWIQRTMR (224 aa)) constitute a Peptidase S1 domain. An intrachain disulfide couples Cys48 to Cys64. The active-site Charge relay system is His63. N-linked (GlcNAc...) asparagine glycosylation is present at Asn70. Asp107 functions as the Charge relay system in the catalytic mechanism. Disulfide bonds link Cys141–Cys207 and Cys172–Cys186. Catalysis depends on Ser201, which acts as the Charge relay system.

This sequence belongs to the peptidase S1 family. Granzyme subfamily.

It is found in the secreted. The protein resides in the cytoplasmic granule. The polypeptide is Mast cell protease 3 (Ovis aries (Sheep)).